Here is a 240-residue protein sequence, read N- to C-terminus: Probable transcriptional regulatory protein Adeh_2184 (240 aa).

The protein belongs to the TACO1 family.

The protein resides in the cytoplasm. The chain is Probable transcriptional regulatory protein Adeh_2184 from Anaeromyxobacter dehalogenans (strain 2CP-C).